A 329-amino-acid polypeptide reads, in one-letter code: Phosphate acyltransferase (329 aa).

The protein belongs to the PlsX family. As to quaternary structure, homodimer. Probably interacts with PlsY.

The protein localises to the cytoplasm. The catalysed reaction is a fatty acyl-[ACP] + phosphate = an acyl phosphate + holo-[ACP]. The protein operates within lipid metabolism; phospholipid metabolism. Catalyzes the reversible formation of acyl-phosphate (acyl-PO(4)) from acyl-[acyl-carrier-protein] (acyl-ACP). This enzyme utilizes acyl-ACP as fatty acyl donor, but not acyl-CoA. This is Phosphate acyltransferase from Exiguobacterium sp. (strain ATCC BAA-1283 / AT1b).